Consider the following 306-residue polypeptide: Ribosomal protein L11 methyltransferase (306 aa).

Residues T139, G173, D195, and N242 each contribute to the S-adenosyl-L-methionine site.

It belongs to the methyltransferase superfamily. PrmA family.

It is found in the cytoplasm. It carries out the reaction L-lysyl-[protein] + 3 S-adenosyl-L-methionine = N(6),N(6),N(6)-trimethyl-L-lysyl-[protein] + 3 S-adenosyl-L-homocysteine + 3 H(+). Functionally, methylates ribosomal protein L11. This is Ribosomal protein L11 methyltransferase from Nostoc sp. (strain PCC 7120 / SAG 25.82 / UTEX 2576).